Consider the following 617-residue polypeptide: LEAF RUST 10 DISEASE-RESISTANCE LOCUS RECEPTOR-LIKE PROTEIN KINASE-like 2.4 (617 aa).

A signal peptide spans 1–26 (MYYLPSSCLVLFLFFSLFYHLPCASS). At 27–243 (KQTLGWCESQ…LPTRLSSEAK (217 aa)) the chain is on the extracellular side. Asn41, Asn69, Asn86, Asn112, and Asn184 each carry an N-linked (GlcNAc...) asparagine glycan. A helical membrane pass occupies residues 244–264 (IATIAGVSLLPFLVLTLVVHI). Over 265 to 617 (IRKQKTSNDK…SEENSISSEI (353 aa)) the chain is Cytoplasmic. Residues 307–594 (NSFAEVVGRG…ALEVPPRPVL (288 aa)) form the Protein kinase domain. ATP is bound by residues 313–321 (VGRGGFGIV) and Lys335. Tyr380 is modified (phosphotyrosine). Catalysis depends on Asp431, which acts as the Proton acceptor. Thr468 and Thr471 each carry phosphothreonine.

Belongs to the protein kinase superfamily. Ser/Thr protein kinase family.

It localises to the membrane. It carries out the reaction L-seryl-[protein] + ATP = O-phospho-L-seryl-[protein] + ADP + H(+). It catalyses the reaction L-threonyl-[protein] + ATP = O-phospho-L-threonyl-[protein] + ADP + H(+). The sequence is that of LEAF RUST 10 DISEASE-RESISTANCE LOCUS RECEPTOR-LIKE PROTEIN KINASE-like 2.4 from Arabidopsis thaliana (Mouse-ear cress).